Here is a 431-residue protein sequence, read N- to C-terminus: Tol-Pal system protein TolB (431 aa).

An N-terminal signal peptide occupies residues 1–26 (MSLMTKLGFRALVASCLITAGSAANA). The tract at residues 406–431 (DGSAPPQILSVQGGSVREPSWGPFMQ) is disordered.

The protein belongs to the TolB family. In terms of assembly, the Tol-Pal system is composed of five core proteins: the inner membrane proteins TolA, TolQ and TolR, the periplasmic protein TolB and the outer membrane protein Pal. They form a network linking the inner and outer membranes and the peptidoglycan layer.

Its subcellular location is the periplasm. Part of the Tol-Pal system, which plays a role in outer membrane invagination during cell division and is important for maintaining outer membrane integrity. The polypeptide is Tol-Pal system protein TolB (Burkholderia cenocepacia (strain ATCC BAA-245 / DSM 16553 / LMG 16656 / NCTC 13227 / J2315 / CF5610) (Burkholderia cepacia (strain J2315))).